Reading from the N-terminus, the 330-residue chain is MTMKQPVRVAVTGAAGQIGYSLLFRIAAGDMLGQDQPVILQLLEITPALKALNGVVMELRDGAFPLLADVITSDDPMVAFKDADYALLVGAMPRKAGMERGDLLGANGGIFKPQGEALGAVASRNVKVLVVGNPANTNALIAQQNAPDLDPKCFTAMVRLDHNRALSQLAEKTGAAVSDIKNVTIWGNHSSTQYPDLSQATVNGKPALEQVDRTWYENDYIPTVAKRGAAIIEARGASSAASAASAAIDHMHDWALGTKDGEWVSMGIPSDGSYGIPEGLIYGFPVRVKDGKYEIVQGLDVSDFSRGKMDATAQELEEERDEVRKLGLVK.

Position 13–19 (13–19 (GAAGQIG)) interacts with NAD(+). Arg-94 and Arg-100 together coordinate substrate. NAD(+) contacts are provided by residues Asn-107, Gln-114, and 131 to 133 (VGN). Substrate contacts are provided by Asn-133 and Arg-164. The active-site Proton acceptor is the His-189.

Belongs to the LDH/MDH superfamily. MDH type 2 family.

The enzyme catalyses (S)-malate + NAD(+) = oxaloacetate + NADH + H(+). Catalyzes the reversible oxidation of malate to oxaloacetate. The protein is Malate dehydrogenase of Deinococcus radiodurans (strain ATCC 13939 / DSM 20539 / JCM 16871 / CCUG 27074 / LMG 4051 / NBRC 15346 / NCIMB 9279 / VKM B-1422 / R1).